The sequence spans 241 residues: MLDNIRIVLVETSHTGNMGSVARAMKTMGLSKLYLVNPLVKPDSQAIALAAGASDVIGNATLVDSLDQALEGCNLVVGTSARSRTLPWPMLEPRECGVRSAQEAEHAPVALVFGRERVGLTNDELQKCHYHVAIPANPEYSSLNLAMAVQIIAYEVRIAHLDRLQAGQPEHEESPYPLVDDLERFYQHLEQTLLQTGFIRPAHQGQVMNKLRRLFTRARPEAQELNILRGILSSVQKTHDE.

S-adenosyl-L-methionine is bound by residues 79–81, Gly-114, Ile-134, and 141–143; these read TSA and SSL.

It belongs to the class IV-like SAM-binding methyltransferase superfamily. RNA methyltransferase TrmH family. In terms of assembly, homodimer.

Its subcellular location is the cytoplasm. It catalyses the reaction cytidine(32) in tRNA + S-adenosyl-L-methionine = 2'-O-methylcytidine(32) in tRNA + S-adenosyl-L-homocysteine + H(+). The enzyme catalyses uridine(32) in tRNA + S-adenosyl-L-methionine = 2'-O-methyluridine(32) in tRNA + S-adenosyl-L-homocysteine + H(+). Functionally, catalyzes the formation of 2'O-methylated cytidine (Cm32) or 2'O-methylated uridine (Um32) at position 32 in tRNA. This chain is tRNA (cytidine/uridine-2'-O-)-methyltransferase TrmJ (trmJ), found in Pectobacterium atrosepticum (strain SCRI 1043 / ATCC BAA-672) (Erwinia carotovora subsp. atroseptica).